The chain runs to 335 residues: Antigen-presenting glycoprotein CD1d (335 aa).

The N-terminal stretch at 1–19 (MGCLLFLLLWALLQAWGSA) is a signal peptide. Residues 20–301 (EVPQRLFPLR…VLYWGGSYTS (282 aa)) lie on the Extracellular side of the membrane. Residues Asn38 and Asn60 are each glycosylated (N-linked (GlcNAc...) asparagine). Asp98 contributes to the a D-galactosylceramide binding site. 2 disulfide bridges follow: Cys120–Cys184 and Cys224–Cys279. Asn126 is a glycosylation site (N-linked (GlcNAc...) asparagine). 169–172 (DKWT) contributes to the a D-galactosylceramide binding site. Asn181 carries an N-linked (GlcNAc...) asparagine glycan. One can recognise an Ig-like domain in the interval 185-292 (PQFVSGLLES…HSSLEGQDIV (108 aa)). The helical transmembrane segment at 302–322 (MGLIALAVLACLLFLLIVGFT) threads the bilayer. Residues 323–335 (SRFKRQTSYQGVL) are Cytoplasmic-facing. The Internalization signal signature appears at 331-334 (YQGV).

Heterodimer with B2M (beta-2-microglobulin). Interacts with MHC II. In terms of tissue distribution, expressed on cortical thymocytes, on certain T-cell leukemias, and in various other tissues.

Its subcellular location is the cell membrane. It localises to the basolateral cell membrane. The protein resides in the endosome membrane. It is found in the lysosome membrane. The protein localises to the endoplasmic reticulum membrane. In terms of biological role, antigen-presenting protein that binds self and non-self glycolipids and presents them to T-cell receptors on natural killer T-cells. The polypeptide is Antigen-presenting glycoprotein CD1d (CD1D) (Homo sapiens (Human)).